The sequence spans 185 residues: CASP-like protein 2C1 (185 aa).

The Cytoplasmic segment spans residues 1–12 (MVAARVSEVKAE). A helical transmembrane segment spans residues 13–33 (GVLRGACAALAAAAALLVGLS). Over 34–52 (TQTETVLLVRKKATVKDVQ) the chain is Extracellular. The helical transmembrane segment at 53–73 (ALWVLAMAAAAAAGYHLLQLL) threads the bilayer. The Cytoplasmic segment spans residues 74-105 (KCFYLGRRVGGGASPCRRSSRALAWTCLLLDK). The chain crosses the membrane as a helical span at residues 106 to 126 (ACAYTTFATTVAAAQACVIAL). Residues 127-147 (DGAHALQWTKLCNIYTRFCEQ) lie on the Extracellular side of the membrane. A helical transmembrane segment spans residues 148–168 (IAGSLVLGMLAAVGTAVLSAA). Over 169–185 (SARNVFRHYSPGTYAAH) the chain is Cytoplasmic.

The protein belongs to the Casparian strip membrane proteins (CASP) family. In terms of assembly, homodimer and heterodimers.

The protein resides in the cell membrane. This Sorghum bicolor (Sorghum) protein is CASP-like protein 2C1.